Reading from the N-terminus, the 395-residue chain is Axin-like protein 1 (395 aa).

The region spanning 4-132 (RSKTFSDRIL…TTTADVSNTW (129 aa)) is the RGS domain. The disordered stretch occupies residues 190 to 230 (QETKNSSETEEEKKKERSADPYGSDGFAPPPQSTQTHTLRN). Residues 194–208 (NSSETEEEKKKERSA) show a composition bias toward basic and acidic residues. Residues 301–386 (EIQKLTVELR…RITAICRMCP (86 aa)) form the DIX domain.

As to quaternary structure, interacts with bar-1, dsh-2, gsk-3, and mig-5.

Functionally, works in parallel with pry-1 in negatively regulating bar-1 signaling in vulval precursor cells and Q neuroblasts. Shown to have a role in excretory cell development. In Caenorhabditis briggsae, this protein is Axin-like protein 1 (axl-1).